Reading from the N-terminus, the 977-residue chain is DNA-directed RNA polymerase 3B, chloroplastic (977 aa).

The N-terminal 71 residues, 1-71 (MASTASYSPS…NNIQSQTTVC (71 aa)), are a transit peptide targeting the chloroplast. Active-site residues include Asp678, Lys753, and Asp910.

It belongs to the phage and mitochondrial RNA polymerase family.

The protein resides in the plastid. It localises to the chloroplast. It catalyses the reaction RNA(n) + a ribonucleoside 5'-triphosphate = RNA(n+1) + diphosphate. In terms of biological role, DNA-dependent RNA polymerase catalyzes the transcription of DNA into RNA using the four ribonucleoside triphosphates as substrates. This Nicotiana tabacum (Common tobacco) protein is DNA-directed RNA polymerase 3B, chloroplastic (RPOT3-TOM).